Reading from the N-terminus, the 494-residue chain is Ubiquinol-cytochrome-c reductase complex core protein I, mitochondrial (494 aa).

Residue H70 coordinates Zn(2+). The Proton acceptor role is filled by E73. H74 and E150 together coordinate Zn(2+).

It belongs to the peptidase M16 family. UQCRC1/QCR1 subfamily. As to quaternary structure, component of the ubiquinol-cytochrome c oxidoreductase (cytochrome b-c1 complex, complex III, CIII), a multisubunit enzyme composed of 10 subunits. The complex is composed of 3 respiratory subunits cytochrome b, cytochrome c1 and Rieske protein, 2 core protein subunits, and additional low-molecular weight protein subunits. The complex exists as an obligatory dimer and forms supercomplexes (SCs) in the inner mitochondrial membrane with cytochrome c oxidase (complex IV, CIV). Zn(2+) is required as a cofactor. Post-translationally, the N-terminus is blocked.

Its subcellular location is the mitochondrion inner membrane. Functionally, component of the ubiquinol-cytochrome c oxidoreductase, a multisubunit transmembrane complex that is part of the mitochondrial electron transport chain which drives oxidative phosphorylation. The respiratory chain contains 3 multisubunit complexes succinate dehydrogenase (complex II, CII), ubiquinol-cytochrome c oxidoreductase (cytochrome b-c1 complex, complex III, CIII) and cytochrome c oxidase (complex IV, CIV), that cooperate to transfer electrons derived from NADH and succinate to molecular oxygen, creating an electrochemical gradient over the inner membrane that drives transmembrane transport and the ATP synthase. The cytochrome b-c1 complex catalyzes electron transfer from ubiquinol to cytochrome c, linking this redox reaction to translocation of protons across the mitochondrial inner membrane, with protons being carried across the membrane as hydrogens on the quinol. In the process called Q cycle, 2 protons are consumed from the matrix, 4 protons are released into the intermembrane space and 2 electrons are passed to cytochrome c. The protein is Ubiquinol-cytochrome-c reductase complex core protein I, mitochondrial of Euglena gracilis.